The sequence spans 908 residues: Protein translocase subunit SecA (908 aa).

ATP-binding positions include Gln-87, 105-109, and Asp-513; that span reads GEGKT. Residues 852-863 show a composition bias toward low complexity; the sequence is ARRAQAQHATAE. The interval 852 to 908 is disordered; that stretch reads ARRAQAQHATAENQLADDEAEAASPQTVVRDERKVGRNEPCPCGSGKKYKQCHGKID. Residues Cys-892, Cys-894, Cys-903, and His-904 each contribute to the Zn(2+) site. The span at 898-908 shows a compositional bias: basic residues; the sequence is KKYKQCHGKID.

The protein belongs to the SecA family. As to quaternary structure, monomer and homodimer. Part of the essential Sec protein translocation apparatus which comprises SecA, SecYEG and auxiliary proteins SecDF-YajC and YidC. It depends on Zn(2+) as a cofactor.

The protein resides in the cell inner membrane. It is found in the cytoplasm. The enzyme catalyses ATP + H2O + cellular proteinSide 1 = ADP + phosphate + cellular proteinSide 2.. Functionally, part of the Sec protein translocase complex. Interacts with the SecYEG preprotein conducting channel. Has a central role in coupling the hydrolysis of ATP to the transfer of proteins into and across the cell membrane, serving both as a receptor for the preprotein-SecB complex and as an ATP-driven molecular motor driving the stepwise translocation of polypeptide chains across the membrane. The sequence is that of Protein translocase subunit SecA from Vibrio atlanticus (strain LGP32) (Vibrio splendidus (strain Mel32)).